A 166-amino-acid chain; its full sequence is Peptidyl-prolyl cis-trans isomerase-like 1 (166 aa).

One can recognise a PPIase cyclophilin-type domain in the interval 10-164; it reads QPPNVYLETS…DDVKILKAYP (155 aa). Cyclosporin A is bound by residues 54 to 65, 70 to 71, 99 to 104, 109 to 113, threonine 119, and lysine 125; these read HRIIKDFMIQGG, TG, AMANAG, and GSQFF. Residue serine 149 is modified to Phosphoserine.

Belongs to the cyclophilin-type PPIase family. PPIL1 subfamily. Identified in the spliceosome C complex. Interacts with SNW1/SKIP. Interacts with CDC40/PRP17; this interaction leads to CDC40 isomerization. Interacts with RBM22.

Its subcellular location is the nucleus. The enzyme catalyses [protein]-peptidylproline (omega=180) = [protein]-peptidylproline (omega=0). Its activity is regulated as follows. Inhibited by Cyclosporin A. Functionally, involved in pre-mRNA splicing as component of the spliceosome. PPIases accelerate the folding of proteins. It catalyzes the cis-trans isomerization of proline imidic peptide bonds in oligopeptides. Catalyzes prolyl peptide bond isomerization in CDC40/PRP17. Plays an important role in embryonic brain development; this function is independent of its isomerase activity. The polypeptide is Peptidyl-prolyl cis-trans isomerase-like 1 (Ppil1) (Mus musculus (Mouse)).